The following is a 267-amino-acid chain: tRNA-cytidine(32) 2-sulfurtransferase 2 (267 aa).

The short motif at Ser42–Ser47 is the PP-loop motif element. Residues Cys117, Cys120, and Cys208 each contribute to the [4Fe-4S] cluster site.

Belongs to the TtcA family. As to quaternary structure, homodimer. The cofactor is Mg(2+). It depends on [4Fe-4S] cluster as a cofactor.

Its subcellular location is the cytoplasm. It carries out the reaction cytidine(32) in tRNA + S-sulfanyl-L-cysteinyl-[cysteine desulfurase] + AH2 + ATP = 2-thiocytidine(32) in tRNA + L-cysteinyl-[cysteine desulfurase] + A + AMP + diphosphate + H(+). The protein operates within tRNA modification. Functionally, catalyzes the ATP-dependent 2-thiolation of cytidine in position 32 of tRNA, to form 2-thiocytidine (s(2)C32). The sulfur atoms are provided by the cysteine/cysteine desulfurase (IscS) system. In Francisella tularensis subsp. holarctica (strain FTNF002-00 / FTA), this protein is tRNA-cytidine(32) 2-sulfurtransferase 2.